The primary structure comprises 213 residues: Dimethyl sulfoxide reductase transcriptional activator (213 aa).

Positions 155-206 (LTAKQREAALIAVHHGYYETPRRTELATLAEALGISKSALSQRLNAVEAKLA) constitute an HTH bat-type domain.

Functionally, involved in activating dmsEABCD gene expression related to dimethyl sulfoxide (DMSO) reductase. Required for anaerobic respiration on dimethyl sulfoxide (DMSO). This Haloferax volcanii (strain ATCC 29605 / DSM 3757 / JCM 8879 / NBRC 14742 / NCIMB 2012 / VKM B-1768 / DS2) (Halobacterium volcanii) protein is Dimethyl sulfoxide reductase transcriptional activator.